The following is an 863-amino-acid chain: Glycogen phosphorylase (863 aa).

Residue lysine 618 is modified to N6-(pyridoxal phosphate)lysine.

The protein belongs to the glycogen phosphorylase family. It depends on pyridoxal 5'-phosphate as a cofactor.

It catalyses the reaction [(1-&gt;4)-alpha-D-glucosyl](n) + phosphate = [(1-&gt;4)-alpha-D-glucosyl](n-1) + alpha-D-glucose 1-phosphate. Functionally, phosphorylase is an important allosteric enzyme in carbohydrate metabolism. Enzymes from different sources differ in their regulatory mechanisms and in their natural substrates. However, all known phosphorylases share catalytic and structural properties. The protein is Glycogen phosphorylase (glgP) of Mycobacterium tuberculosis (strain CDC 1551 / Oshkosh).